Here is a 509-residue protein sequence, read N- to C-terminus: Probable aspartic-type endopeptidase CTSD (509 aa).

Positions 1–21 (MQFLWLCLLSAVTLQFTGTLA) are cleaved as a signal peptide. The region spanning 102–408 (YFSEVKVGSE…DFDKNRVGLA (307 aa)) is the Peptidase A1 domain. Residue D120 is part of the active site. A glycan (N-linked (GlcNAc...) asparagine) is linked at N174. D302 is a catalytic residue. A glycan (N-linked (GlcNAc...) asparagine) is linked at N361. The disordered stretch occupies residues 451–489 (NKAPSGGSPGLPAESGSDSTTNGEATNGATSSPNSSSSV). A compositionally biased stretch (polar residues) spans 466 to 480 (GSDSTTNGEATNGAT). N-linked (GlcNAc...) asparagine glycosylation is present at N484. S485 carries GPI-anchor amidated serine lipidation. Positions 486–509 (SSSVLTPTWLTLAVFFAIGSSLWS) are cleaved as a propeptide — removed in mature form.

This sequence belongs to the peptidase A1 family.

Its subcellular location is the cell membrane. Functionally, probable GPI-anchored aspartic-type endopeptidase which contributes to virulence. This is Probable aspartic-type endopeptidase CTSD (CTSD) from Arthroderma benhamiae (strain ATCC MYA-4681 / CBS 112371) (Trichophyton mentagrophytes).